Consider the following 359-residue polypeptide: Probable dual-specificity RNA methyltransferase RlmN (359 aa).

The active-site Proton acceptor is Glu-100. In terms of domain architecture, Radical SAM core spans 106–340 (TDKRLTVCVS…VSVRASRGRD (235 aa)). A disulfide bond links Cys-113 and Cys-345. 3 residues coordinate [4Fe-4S] cluster: Cys-120, Cys-124, and Cys-127. Residues 167 to 168 (GE), Ser-197, 226 to 228 (SLH), and Asn-302 each bind S-adenosyl-L-methionine. Cys-345 serves as the catalytic S-methylcysteine intermediate.

The protein belongs to the radical SAM superfamily. RlmN family. It depends on [4Fe-4S] cluster as a cofactor.

It is found in the cytoplasm. The catalysed reaction is adenosine(2503) in 23S rRNA + 2 reduced [2Fe-2S]-[ferredoxin] + 2 S-adenosyl-L-methionine = 2-methyladenosine(2503) in 23S rRNA + 5'-deoxyadenosine + L-methionine + 2 oxidized [2Fe-2S]-[ferredoxin] + S-adenosyl-L-homocysteine. It catalyses the reaction adenosine(37) in tRNA + 2 reduced [2Fe-2S]-[ferredoxin] + 2 S-adenosyl-L-methionine = 2-methyladenosine(37) in tRNA + 5'-deoxyadenosine + L-methionine + 2 oxidized [2Fe-2S]-[ferredoxin] + S-adenosyl-L-homocysteine. Its function is as follows. Specifically methylates position 2 of adenine 2503 in 23S rRNA and position 2 of adenine 37 in tRNAs. The chain is Probable dual-specificity RNA methyltransferase RlmN from Prochlorococcus marinus (strain NATL1A).